We begin with the raw amino-acid sequence, 496 residues long: Glutamyl-tRNA(Gln) amidotransferase subunit A (496 aa).

Active-site charge relay system residues include Lys-75 and Ser-150. Residue Ser-174 is the Acyl-ester intermediate of the active site.

This sequence belongs to the amidase family. GatA subfamily. In terms of assembly, heterotrimer of A, B and C subunits.

The enzyme catalyses L-glutamyl-tRNA(Gln) + L-glutamine + ATP + H2O = L-glutaminyl-tRNA(Gln) + L-glutamate + ADP + phosphate + H(+). In terms of biological role, allows the formation of correctly charged Gln-tRNA(Gln) through the transamidation of misacylated Glu-tRNA(Gln) in organisms which lack glutaminyl-tRNA synthetase. The reaction takes place in the presence of glutamine and ATP through an activated gamma-phospho-Glu-tRNA(Gln). The sequence is that of Glutamyl-tRNA(Gln) amidotransferase subunit A from Burkholderia thailandensis (strain ATCC 700388 / DSM 13276 / CCUG 48851 / CIP 106301 / E264).